The sequence spans 102 residues: Co-chaperonin GroES (102 aa).

This sequence belongs to the GroES chaperonin family. As to quaternary structure, heptamer of 7 subunits arranged in a ring. Interacts with the chaperonin GroEL.

It is found in the cytoplasm. In terms of biological role, together with the chaperonin GroEL, plays an essential role in assisting protein folding. The GroEL-GroES system forms a nano-cage that allows encapsulation of the non-native substrate proteins and provides a physical environment optimized to promote and accelerate protein folding. GroES binds to the apical surface of the GroEL ring, thereby capping the opening of the GroEL channel. This Streptomyces coelicolor (strain ATCC BAA-471 / A3(2) / M145) protein is Co-chaperonin GroES.